The following is a 481-amino-acid chain: G-protein coupled receptor 37-like 1 (481 aa).

Positions 1–25 (MRWLWPLAVSLAVILAVGLSRVSGG) are cleaved as a signal peptide. 2 disordered regions span residues 26–58 (APLH…GVQQ) and 70–108 (PIHP…NLTG). The Extracellular segment spans residues 26–134 (APLHLGRHRA…ESSYSAYAIM (109 aa)). O-linked (GalNAc...) threonine glycosylation is found at threonine 79 and threonine 85. A glycan (O-linked (GalNAc...) serine) is linked at serine 86. A glycan (O-linked (GalNAc...) threonine) is linked at threonine 95. Asparagine 105 carries N-linked (GlcNAc...) asparagine glycosylation. O-linked (GalNAc...) threonine glycosylation occurs at threonine 107. Residues 135–155 (LLALVVFAVGIVGNLSVMCIV) form a helical membrane-spanning segment. Residues 156–167 (WHSYYLKSAWNS) are Cytoplasmic-facing. Residues 168–188 (ILASLALWDFLVLFFCLPIVI) form a helical membrane-spanning segment. Over 189 to 205 (FNEITKQRLLGDVSCRA) the chain is Extracellular. Cysteine 203 and cysteine 286 form a disulfide bridge. Residues 206–226 (VPFMEVSSLGVTTFSLCALGI) form a helical membrane-spanning segment. The Cytoplasmic portion of the chain corresponds to 227-251 (DRFHVATSTLPKVRPIERCQSILAK). The helical transmembrane segment at 252–272 (LAVIWVGSMTLAVPELLLWQL) threads the bilayer. Topologically, residues 273 to 310 (AQEPAPTMGTLDSCIMKPSASLPESLYSLVMTYQNARM) are extracellular. The helical transmembrane segment at 311–331 (WWYFGCYFCLPILFTVTCQLV) threads the bilayer. The Cytoplasmic portion of the chain corresponds to 332-361 (TWRVRGPPGRKSECRASKHEQCESQLNSTV). The chain crosses the membrane as a helical span at residues 362-382 (VGLTVVYAFCTLPENVCNIVV). Residues 383–398 (AYLSTELTRQTLDLLG) are Extracellular-facing. A helical transmembrane segment spans residues 399-419 (LINQFSTFFKGAITPVLLLCI). Residues 420–481 (CRPLGQAFLD…PPLLPLGTPC (62 aa)) lie on the Cytoplasmic side of the membrane. Position 471 is a phosphoserine (serine 471). Phosphothreonine is present on threonine 479.

It belongs to the G-protein coupled receptor 1 family. Interacts with the PTCH1 receptor. O-glycosylated. In terms of processing, undergoes metalloprotease-mediated cleavage which reduces its constitutive activity. Post-translationally, ubiquitinated. Expressed in primary cortical astrocytes (at protein level). Expressed in the central nervous system.

The protein localises to the cell membrane. Its subcellular location is the cell projection. It localises to the cilium membrane. G-protein coupled receptor. Has been shown to bind the neuroprotective and glioprotective factor prosaposin (PSAP), leading to endocytosis followed by an ERK phosphorylation cascade. However, other studies have shown that prosaposin does not increase activity. It has been suggested that GPR37L1 is a constitutively active receptor which signals through the guanine nucleotide-binding protein G(s) subunit alpha. Participates in the regulation of postnatal cerebellar development by modulating the Shh pathway. Regulates baseline blood pressure in females and protects against cardiovascular stress in males. Mediates inhibition of astrocyte glutamate transporters and reduction in neuronal N-methyl-D-aspartate receptor activity. The polypeptide is G-protein coupled receptor 37-like 1 (GPR37L1) (Homo sapiens (Human)).